The following is a 349-amino-acid chain: S-adenosylmethionine:tRNA ribosyltransferase-isomerase (349 aa).

It belongs to the QueA family. In terms of assembly, monomer.

The protein resides in the cytoplasm. It catalyses the reaction 7-aminomethyl-7-carbaguanosine(34) in tRNA + S-adenosyl-L-methionine = epoxyqueuosine(34) in tRNA + adenine + L-methionine + 2 H(+). Its pathway is tRNA modification; tRNA-queuosine biosynthesis. Functionally, transfers and isomerizes the ribose moiety from AdoMet to the 7-aminomethyl group of 7-deazaguanine (preQ1-tRNA) to give epoxyqueuosine (oQ-tRNA). The polypeptide is S-adenosylmethionine:tRNA ribosyltransferase-isomerase (Pseudomonas putida (strain W619)).